The sequence spans 166 residues: Nucleotide-binding protein SUN_0226 (166 aa).

It belongs to the YajQ family.

Functionally, nucleotide-binding protein. This is Nucleotide-binding protein SUN_0226 from Sulfurovum sp. (strain NBC37-1).